Reading from the N-terminus, the 2998-residue chain is Probable polyketide synthase 14 (2998 aa).

A Ketosynthase family 3 (KS3) domain is found at 19 to 456 (EDDIAIIGIG…GSNCCLILSE (438 aa)). Residues cysteine 189, histidine 331, and histidine 376 each act as for beta-ketoacyl synthase activity in the active site. The acyl/malonyl transferase stretch occupies residues 657 to 690 (GIEASFIVGHSLGEIPAAYCSGMITLDTLCYLIY). Serine 667 (for acyl/malonyl transferase activity) is an active-site residue. The tract at residues 962 to 1084 (IDQLGFSLIE…GNFQLFTSGN (123 aa)) is N-terminal hotdog fold. One can recognise a PKS/mFAS DH domain in the interval 962-1249 (IDQLGFSLIE…CKSLTIIKDS (288 aa)). Catalysis depends on histidine 996, which acts as the Proton acceptor; for dehydratase activity. Residues 1101 to 1249 (NLTKLTKNEL…CKSLTIIKDS (149 aa)) are C-terminal hotdog fold. The active-site Proton donor; for dehydratase activity is the aspartate 1159. Residues 1979 to 1999 (SILIHSGSGGIGLSALNILKW) form a helical membrane-spanning segment. Residues 2476–2553 (ENDTSIDSLF…SSIKLITNQL (78 aa)) form the Carrier domain. Position 2513 is an O-(pantetheine 4'-phosphoryl)serine (serine 2513). The tract at residues 2559–2578 (DGQQQQHRQNKKNNNIPENK) is disordered. A compositionally biased stretch (low complexity) spans 2561–2573 (QQQQHRQNKKNNN). Residues 2621 to 2641 (IFLTGSTGFLGAYLLWYLIQM) form a helical membrane-spanning segment.

Requires pantetheine 4'-phosphate as cofactor.

The protein resides in the membrane. Probable polyketide synthase. This Dictyostelium discoideum (Social amoeba) protein is Probable polyketide synthase 14 (pks14).